The following is a 255-amino-acid chain: GTP cyclohydrolase III 1 (255 aa).

The protein belongs to the archaeal-type GTP cyclohydrolase family.

It carries out the reaction GTP + 3 H2O = 2-amino-5-formylamino-6-(5-phospho-D-ribosylamino)pyrimidin-4(3H)-one + 2 phosphate + 2 H(+). Its function is as follows. Catalyzes the formation of 2-amino-5-formylamino-6-ribofuranosylamino-4(3H)-pyrimidinone ribonucleotide monophosphate and inorganic phosphate from GTP. Also has an independent pyrophosphate phosphohydrolase activity. In Halobacterium salinarum (strain ATCC 700922 / JCM 11081 / NRC-1) (Halobacterium halobium), this protein is GTP cyclohydrolase III 1 (gch31).